We begin with the raw amino-acid sequence, 261 residues long: Cytochrome c oxidase subunit 3 (261 aa).

At 1–15 the chain is on the mitochondrial matrix side; sequence MVHQSHAYHMLKPSP. A helical membrane pass occupies residues 16-34; that stretch reads WPLTGALSALLMTSGLAMW. Topologically, residues 35-40 are mitochondrial intermembrane; it reads FHFHST. A helical membrane pass occupies residues 41 to 66; sequence TLLLTGMLTNALTMYQWWRDVVREST. Residues 67 to 72 lie on the Mitochondrial matrix side of the membrane; it reads YQGHHT. A helical membrane pass occupies residues 73–105; it reads LPVQKGLRYGMILFITSEVFFFAGFFWAFYHSS. Residues 106 to 128 lie on the Mitochondrial intermembrane side of the membrane; it reads LAPTPQLGGHWPPTGITPLNPLE. The helical transmembrane segment at 129–152 threads the bilayer; the sequence is VPLLNTAVLLASGVSITWAHHSLM. Residues 153–155 lie on the Mitochondrial matrix side of the membrane; it reads ENN. A helical membrane pass occupies residues 156–183; that stretch reads RTQMIQALLITILLGIYFTLLQASEYIE. The Mitochondrial intermembrane segment spans residues 184–190; it reads APFTISD. Residues 191-223 traverse the membrane as a helical segment; sequence GIYGSTFFMTTGFHGLHVIIGSTFLTVCLSCQL. Topologically, residues 224–232 are mitochondrial matrix; the sequence is LFHFTSKHH. The helical transmembrane segment at 233–256 threads the bilayer; the sequence is FGFEAAAWYWHFVDVVWLFLYVSI. Residues 257–261 lie on the Mitochondrial intermembrane side of the membrane; that stretch reads YWWGS.

Belongs to the cytochrome c oxidase subunit 3 family. Component of the cytochrome c oxidase (complex IV, CIV), a multisubunit enzyme composed of 14 subunits. The complex is composed of a catalytic core of 3 subunits MT-CO1, MT-CO2 and MT-CO3, encoded in the mitochondrial DNA, and 11 supernumerary subunits COX4I, COX5A, COX5B, COX6A, COX6B, COX6C, COX7A, COX7B, COX7C, COX8 and NDUFA4, which are encoded in the nuclear genome. The complex exists as a monomer or a dimer and forms supercomplexes (SCs) in the inner mitochondrial membrane with NADH-ubiquinone oxidoreductase (complex I, CI) and ubiquinol-cytochrome c oxidoreductase (cytochrome b-c1 complex, complex III, CIII), resulting in different assemblies (supercomplex SCI(1)III(2)IV(1) and megacomplex MCI(2)III(2)IV(2)).

It localises to the mitochondrion inner membrane. It carries out the reaction 4 Fe(II)-[cytochrome c] + O2 + 8 H(+)(in) = 4 Fe(III)-[cytochrome c] + 2 H2O + 4 H(+)(out). Component of the cytochrome c oxidase, the last enzyme in the mitochondrial electron transport chain which drives oxidative phosphorylation. The respiratory chain contains 3 multisubunit complexes succinate dehydrogenase (complex II, CII), ubiquinol-cytochrome c oxidoreductase (cytochrome b-c1 complex, complex III, CIII) and cytochrome c oxidase (complex IV, CIV), that cooperate to transfer electrons derived from NADH and succinate to molecular oxygen, creating an electrochemical gradient over the inner membrane that drives transmembrane transport and the ATP synthase. Cytochrome c oxidase is the component of the respiratory chain that catalyzes the reduction of oxygen to water. Electrons originating from reduced cytochrome c in the intermembrane space (IMS) are transferred via the dinuclear copper A center (CU(A)) of subunit 2 and heme A of subunit 1 to the active site in subunit 1, a binuclear center (BNC) formed by heme A3 and copper B (CU(B)). The BNC reduces molecular oxygen to 2 water molecules using 4 electrons from cytochrome c in the IMS and 4 protons from the mitochondrial matrix. In Pongo pygmaeus (Bornean orangutan), this protein is Cytochrome c oxidase subunit 3 (MT-CO3).